The sequence spans 228 residues: NADH-quinone oxidoreductase subunit C (228 aa).

It belongs to the complex I 30 kDa subunit family. As to quaternary structure, NDH-1 is composed of 14 different subunits. Subunits NuoB, C, D, E, F, and G constitute the peripheral sector of the complex.

The protein resides in the cell membrane. It carries out the reaction a quinone + NADH + 5 H(+)(in) = a quinol + NAD(+) + 4 H(+)(out). Functionally, NDH-1 shuttles electrons from NADH, via FMN and iron-sulfur (Fe-S) centers, to quinones in the respiratory chain. The immediate electron acceptor for the enzyme in this species is believed to be a menaquinone. Couples the redox reaction to proton translocation (for every two electrons transferred, four hydrogen ions are translocated across the cytoplasmic membrane), and thus conserves the redox energy in a proton gradient. The sequence is that of NADH-quinone oxidoreductase subunit C from Mycobacteroides abscessus (strain ATCC 19977 / DSM 44196 / CCUG 20993 / CIP 104536 / JCM 13569 / NCTC 13031 / TMC 1543 / L948) (Mycobacterium abscessus).